The sequence spans 192 residues: MQSHPEVAVLRYGHRPGRDDRMTTHVGLTARALGADRVLFPDNATQAAETVRDITGRFGGPFDVERTTELNATIEDWPGVVVHLTMYGEQLQSVDDEIRTTHREEPVLVVVGGEKVPGDVYEAADWNVGVTNQPHSEVAGLAVFLDRLFDGRELEQGYENAERRVIPEELGKHVVDVEDGDHAEGAAAGDGD.

S-adenosyl-L-methionine-binding positions include leucine 84 and 112-116 (GGEKV).

It belongs to the aTrm56 family. As to quaternary structure, homodimer.

It localises to the cytoplasm. It catalyses the reaction cytidine(56) in tRNA + S-adenosyl-L-methionine = 2'-O-methylcytidine(56) in tRNA + S-adenosyl-L-homocysteine + H(+). Functionally, specifically catalyzes the AdoMet-dependent 2'-O-ribose methylation of cytidine at position 56 in tRNAs. The polypeptide is tRNA (cytidine(56)-2'-O)-methyltransferase (Halobacterium salinarum (strain ATCC 700922 / JCM 11081 / NRC-1) (Halobacterium halobium)).